The following is a 2559-amino-acid chain: MARSKLLLGKLLPLILIFLGLLVQNACSPTEAPELTKRCDKKSTLTIKTECQSCSVNIAVKCPDGYIKITNGTVGVRDCRYSLKIQSYVLDIPGCRHICRKDYLQPQCCPGHWGPDCMECPGGARAPCGGRGVCDEGMEGTGSCSCRAGFRGTACENCAAEDVFGPNCSAVCSCVHGVCNSGISGDGTCECLSAYRGPRCDKPIPECAALLCPENSRCSPSSKDETKLQCKCLPSYKGDGQTCKPINPCLKNVCHPHASCSYLGPNRHSCVCQKGYQGDGQVCLPVDPCQTSYGNCPTKSTVCRYDGPGQSHCECKEHYRNFVPGVGCSMTDICESKNPCHKNANCSTVSPGQTQCTCQKGYVGDGLNCYGNIMQRLRELNTEPRGMWQGQLTSFISILDRTYAWPLSNLGPFTVLLPSDKGLKGVDVKELLMDKEAARYFVKLHIIAGQMSTEQMYNLDTFYTLTGKSGEIINKDKDNQLKLKLYGSKIVQIIQGNIVASNGLVHILDRAMDKIEPTLESNPQQTIMTMLQPRYGKFRSLLEKTNVGQALEKGGIDEPYTIFVPSNEALSNMTAGVLDYLLSPEGSRKLLELVRYHIVAFTQLEVATLVSTLHIRSMANQIITFNISSKGQILANNVAVDETEVAAKNGRIYTLTGVLIPPSILPILPHRCNETKREMKLGTCVRCFMKNWSKCPTNSEPTAIFTNKCFYGSRAWNLKIGCARYCDVTVEIPRCCKGFFGPDCNPCPGGFMNPCSGNGQCIDGLGGNGTCICEDGFQGSRCQFCSKPNRYGPQCNRTCQCVHGICDNRLDSDGSCLPGTCREGTAGRFCDKQTSACGPYMQFCHIHATCEYSNETASCVCNDGYEGDGTLCSKKDPCLGSTSRGGCSPNAECIQASTGTYSCVCQRGWTGNGRDCVEINSCLLPSSGGCHDNATCLYVGPGQNECECKKGFRGNGIDCEPIISCLEQIEKCHPLATCQYTLSGVWSCVCQEGYEGNGVLCYGNVLMELSFLSEAAVFYQWINNASLQSMLSATSNLTVLVPSLQAIKDMDQNEKSFWLSRNNIPALIKYHTLLGTYRVADLQTLPSSHMLATSLQGSFLRLDKADGNITIEGASFVDGDNAATNGVVHIINKVLIPQRGLTGSLPSLLTRLEQMPDYSIFRGYIIHYNLASAIEAADAYTVFVPNNEAIESYIREKKATSLKEDILQYHVVLGEKLLRNDLHNGMHRETMLGFSYLLAFFLHNDQLYVNEAPINYTNVATDKGVIHGLEKVLEIKKNRCDNNDTIIVRGKCGKCSQQTLCPLETKPLSETRKCIYSVYFMGKRSIFIGCQLQCVRTIITSACCAGFFGPQCQACPGKGQNVCSGNGFCLDGVNGTGTCECEQGFNGTACETCTEGKYGIHCDQACSCVHGRCNQGPSGDGSCDCDVGWRGVKCDSEITTDNCNGTCHTSANCLLDPDGKASCKCAAGFQGNGTVCTAINACEISNGGCSAKADCKRTIPGSRVCVCKAGYTGDGIVCLEINPCLENHGGCDRHAECTQTGPNQAVCNCLPKYTGDGKVCTLINVCLTNNGGCSPFAFCNHTEQDQRTCTCKPDYTGDGIVCRGSIHSELPKNPSTSQYFFQLQEHAVQELAGPGPFTVFVPSSDSFNSESKLKVWDKQGLMSQILRYHVVACQQLLLENLKVITSATTLQGEPISISVSQDTVLINKKAKVLSSDIISTNGVIHVIDTLLSPQNLLITPKGASGRVLLNLTTVAANHGYTKFSKLIQDSGLLKVITDPMHTPVTLFWPTDKALQALPQEQQDFLFNEDNKDKLKAYLKFHVIRDTMALASDLPRSASWKTLQGSELSVRCGTGSDVGELFLNGQMCRIIQRRLLFDGGVAYGIDCLLMDPTEGGRCDTFTTFNIPGECGSCFSTPRCPLQSKPKGVRKKCIYNPLPFRRDVEGCQNLCTLVVHVPRCCSGYFMPDCQACPGGPDTPCNNRGMCYDQYKPTGQCQCHTGFNGTACELCLPGRFGPDCQPCGCSEHGQCDEGITGSGQCLCEAGWTGRFCDAPTVVIPVCIPACSMHATCMENNTCVCNLNYEGDGITCTVVDFCKQNNGGCAKVAKCSQKGTQVSCSCQKGYKGDGHSCTEIDPCANGVNGGCHEHATCRMTGPGKQKCECKSHYVGDGRDCEPEQLPLDRCLQDNGQCHPDANCVDLHFQDTTVGVFHLRSPLGQYKLTFDKAKEACAKEAASIATYNQLSYAQKAKYHLCSAGWLESGRVAYPTIYASKKCANIVGIVDYGTRTNKSEMWDVFCYRMKDVNCTCKAGYVGDGFSCNGNLLQVLMSFPSLTNFLTEVLVFSRSSAQGRAFLKHLTDLSISGTLFVPQNSGLPKNKSLSGRDIEHHLTNVNVSFYDDLVNGTVLKTRLGSQLLITSSQDQLHQEARFVDGRAILQWDIIASNGVLHIISEPLKAPPTAATAAHSGLGTGIFCAVVLVTGAIALAAYSYFRLNQRTTGFRRFESEDDIDALAFGKQQPESITNPLYETSTPAAPEPSCDPFTDSGERELENSDPLGALRS.

Residues 1–28 form the signal peptide; sequence MARSKLLLGKLLPLILIFLGLLVQNACS. Residues 29-2464 lie on the Extracellular side of the membrane; that stretch reads PTEAPELTKR…PPTAATAAHS (2436 aa). An N-linked (GlcNAc...) asparagine glycan is attached at Asn-71. EGF-like domains lie at 116–156, 164–201, 203–244, 245–284, and 330–370; these read DCME…TACE, FGPN…PRCD, PIPE…QTCK, PINP…QVCL, and MTDI…LNCY. Disulfide bonds link Cys-120–Cys-134, Cys-128–Cys-144, and Cys-146–Cys-155. Asn-167 carries an N-linked (GlcNAc...) asparagine glycan. 12 disulfides stabilise this stretch: Cys-168–Cys-179, Cys-172–Cys-189, Cys-191–Cys-200, Cys-207–Cys-218, Cys-212–Cys-230, Cys-232–Cys-243, Cys-249–Cys-260, Cys-254–Cys-270, Cys-272–Cys-283, Cys-334–Cys-346, Cys-340–Cys-356, and Cys-358–Cys-369. N-linked (GlcNAc...) asparagine glycosylation occurs at Asn-345. FAS1 domains lie at 379–512 and 522–659; these read ELNT…DRAM and NPQQ…TGVL. Residues Asn-572, Asn-626, Asn-673, and Asn-691 are each glycosylated (N-linked (GlcNAc...) asparagine). The 41-residue stretch at 743-783 folds into the EGF-like 6 domain; it reads DCNPCPGGFMNPCSGNGQCIDGLGGNGTCICEDGFQGSRCQ. 3 disulfide bridges follow: Cys-747–Cys-761, Cys-755–Cys-771, and Cys-773–Cys-782. An N-linked (GlcNAc...) asparagine glycan is attached at Asn-768. An N-linked (GlcNAc...) asparagine glycan is attached at Asn-796. EGF-like domains are found at residues 833–873, 874–917, 918–960, and 961–1002; these read QTSA…TLCS, KKDP…RDCV, EINS…IDCE, and PIIS…VLCY. Intrachain disulfides connect Cys-837-Cys-850, Cys-844-Cys-859, Cys-861-Cys-872, Cys-878-Cys-893, Cys-887-Cys-903, Cys-905-Cys-916, Cys-922-Cys-936, Cys-930-Cys-946, Cys-948-Cys-959, Cys-965-Cys-978, Cys-972-Cys-988, and Cys-990-Cys-1001. An N-linked (GlcNAc...) asparagine glycan is attached at Asn-854. Asn-933 carries an N-linked (GlcNAc...) asparagine glycan. FAS1 domains are found at residues 1002–1135 and 1145–1273; these read YGNV…NKVL and LPSL…EKVL. N-linked (GlcNAc...) asparagine glycans are attached at residues Asn-1024, Asn-1036, Asn-1108, Asn-1255, and Asn-1283. The 66-residue stretch at 1350–1415 folds into the Laminin EGF-like 1 domain; it reads PQCQACPGKG…CSCVHGRCNQ (66 aa). Disulfide bonds link Cys-1355–Cys-1369, Cys-1363–Cys-1379, Cys-1381–Cys-1390, Cys-1402–Cys-1413, Cys-1406–Cys-1423, Cys-1425–Cys-1434, Cys-1443–Cys-1453, Cys-1447–Cys-1463, Cys-1465–Cys-1476, Cys-1482–Cys-1495, Cys-1489–Cys-1505, Cys-1507–Cys-1518, Cys-1524–Cys-1537, Cys-1531–Cys-1547, Cys-1549–Cys-1560, Cys-1566–Cys-1579, Cys-1573–Cys-1589, and Cys-1591–Cys-1602. N-linked (GlcNAc...) asparagine glycans are attached at residues Asn-1374 and Asn-1386. EGF-like domains lie at 1439–1477, 1478–1519, 1520–1561, and 1562–1603; these read TTDN…TVCT, AINA…IVCL, EINP…KVCT, and LINV…IVCR. N-linked (GlcNAc...) asparagine glycosylation occurs at Asn-1444. A glycan (N-linked (GlcNAc...) asparagine) is linked at Asn-1472. N-linked (GlcNAc...) asparagine glycosylation is present at Asn-1580. 2 FAS1 domains span residues 1603–1731 and 1747–1888; these read RGSI…DTLL and VLLN…DCLL. A glycan (N-linked (GlcNAc...) asparagine) is linked at Asn-1750. One can recognise a Laminin EGF-like 2 domain in the interval 1965–2030; sequence PDCQACPGGP…GCSEHGQCDE (66 aa). Disulfide bonds link Cys-1970-Cys-1984, Cys-1978-Cys-1994, Cys-1996-Cys-2005, Cys-2017-Cys-2028, Cys-2022-Cys-2038, Cys-2040-Cys-2049, Cys-2059-Cys-2069, Cys-2063-Cys-2075, Cys-2077-Cys-2088, Cys-2094-Cys-2107, Cys-2101-Cys-2116, Cys-2118-Cys-2129, Cys-2135-Cys-2149, Cys-2143-Cys-2159, Cys-2161-Cys-2172, Cys-2228-Cys-2296, and Cys-2252-Cys-2273. Asn-2001 is a glycosylation site (N-linked (GlcNAc...) asparagine). EGF-like domains follow at residues 2055–2089, 2090–2130, and 2131–2173; these read VIPV…ITCT, VVDF…HSCT, and EIDP…RDCE. A glycan (N-linked (GlcNAc...) asparagine) is linked at Asn-2072. One can recognise a Link domain in the interval 2206 to 2298; sequence GVFHLRSPLG…SEMWDVFCYR (93 aa). N-linked (GlcNAc...) asparagine glycosylation is found at Asn-2287, Asn-2303, Asn-2375, Asn-2391, and Asn-2400. The region spanning 2318–2452 is the FAS1 7 domain; sequence NGNLLQVLMS…GVLHIISEPL (135 aa). A helical membrane pass occupies residues 2465 to 2485; the sequence is GLGTGIFCAVVLVTGAIALAA. The Cytoplasmic portion of the chain corresponds to 2486 to 2559; the sequence is YSYFRLNQRT…NSDPLGALRS (74 aa). Ser-2503 carries the phosphoserine modification. Residues 2510–2520 are interaction with TMSB4X; sequence LAFGKQQPESI. The disordered stretch occupies residues 2514–2559; that stretch reads KQQPESITNPLYETSTPAAPEPSCDPFTDSGERELENSDPLGALRS. The span at 2516 to 2530 shows a compositional bias: polar residues; it reads QPESITNPLYETSTP.

Interacts with heparin, alpha-M/beta-2 integrin (ITGAM and ITGB2), and thymosin beta 4 (TMSB4X). Interacts with GULP1. Associates with clathrin and adapter protein AP-2; in liver sinusoidal endothelial cells (LSECs). In terms of processing, glycosylated. Proteolytically processed to yield a smaller protein. Expressed in endothelial sinuses of liver, lymph nodes, bone marrow, spleen and in specialised structures of eye, heart, brain and kidney. Expression is detected in corneal and lens epithelium, in mesenchymal cells of the heart valves, in the ependymal cells lining the ventricles in the brain, and in the prismatic epithelial cells covering the renal papillae.

It localises to the cytoplasm. Its subcellular location is the cell membrane. Phosphatidylserine receptor that enhances the engulfment of apoptotic cells. Hyaluronan receptor that binds to and mediates endocytosis of hyaluronic acid (HA). Also acts, in different species, as a primary systemic scavenger receptor for heparin (Hep), chondroitin sulfate (CS), dermatan sulfate (DS), nonglycosaminoglycan (GAG), acetylated low-density lipoprotein (AcLDL), pro-collagen propeptides and advanced glycation end products (AGE). May serve to maintain tissue integrity by supporting extracellular matrix turnover or it may contribute to maintaining fluidity of bodily liquids by resorption of hyaluronan. Counter receptor which plays an important role in lymphocyte recruitment in the hepatic vasculature. Binds to both Gram-positive and Gram-negative bacteria and may play a role in defense against bacterial infection. The proteolytically processed short form also functions as an endocytosis receptor for heparin internalization as well as HA and CS. This chain is Stabilin-2, found in Mus musculus (Mouse).